Consider the following 521-residue polypeptide: Cytochrome P450 1A1 (521 aa).

Residue Phe-229 coordinates substrate. Cys-463 is a heme binding site.

It belongs to the cytochrome P450 family. Heme is required as a cofactor.

The protein resides in the endoplasmic reticulum membrane. Its subcellular location is the microsome membrane. It carries out the reaction an organic molecule + reduced [NADPH--hemoprotein reductase] + O2 = an alcohol + oxidized [NADPH--hemoprotein reductase] + H2O + H(+). In terms of biological role, cytochromes P450 are a group of heme-thiolate monooxygenases. They oxidize a variety of structurally unrelated compounds, including steroids, fatty acids, and xenobiotics. The sequence is that of Cytochrome P450 1A1 (cyp1a1) from Platichthys flesus (European flounder).